A 185-amino-acid chain; its full sequence is UPF0301 protein MS0260 (185 aa).

This sequence belongs to the UPF0301 (AlgH) family.

This Mannheimia succiniciproducens (strain KCTC 0769BP / MBEL55E) protein is UPF0301 protein MS0260.